We begin with the raw amino-acid sequence, 248 residues long: Anamorsin homolog (248 aa).

The interval 4 to 130 is N-terminal SAM-like domain; the sequence is FKGLQKSLYI…ETGSSARLSF (127 aa). A linker region spans residues 131–161; the sequence is AKKTSSVNVWKISGDDEELIDEEELLDEEDK. Positions 172, 181, 184, and 186 each coordinate [2Fe-2S] cluster. Residues 172–186 form a fe-S binding site A region; that stretch reads CSTTGKRKACKNCSC. 4 residues coordinate [4Fe-4S] cluster: Cys209, Cys212, Cys220, and Cys223. Short sequence motifs (cx2C motif) lie at residues 209 to 212 and 220 to 223; these read CGNC and CSTC. Positions 209 to 223 are fe-S binding site B; it reads CGNCYLGDAFRCSTC.

The protein belongs to the anamorsin family. In terms of assembly, monomer. [2Fe-2S] cluster is required as a cofactor. Requires [4Fe-4S] cluster as cofactor.

It is found in the cytoplasm. It localises to the mitochondrion intermembrane space. Its function is as follows. Component of the cytosolic iron-sulfur (Fe-S) protein assembly (CIA) machinery. Required for the maturation of extramitochondrial Fe-S proteins. Part of an electron transfer chain functioning in an early step of cytosolic Fe-S biogenesis, facilitating the de novo assembly of a [4Fe-4S] cluster on the cytosolic Fe-S scaffold complex. Electrons are transferred from NADPH via a FAD- and FMN-containing diflavin oxidoreductase. Together with the diflavin oxidoreductase, also required for the assembly of the diferric tyrosyl radical cofactor of ribonucleotide reductase (RNR), probably by providing electrons for reduction during radical cofactor maturation in the catalytic small subunit. This is Anamorsin homolog from Drosophila virilis (Fruit fly).